The sequence spans 226 residues: Late protein I226R (226 aa).

The first 16 residues, 1–16 (MKMETFLVCLFHNADG), serve as a signal peptide directing secretion. N-linked (GlcNAc...) asparagine; by host glycans are attached at residues asparagine 142 and asparagine 164.

Belongs to the asfivirus I226R family.

In terms of biological role, plays a role in the inhibition of host NF-kappa-B and IRF3 signaling pathways. Mechanistically, promotes the degradation of host IKBKG through enhancing its ubiquitination leading to inhibition of both pathways. This African swine fever virus (isolate Warthog/Namibia/Wart80/1980) (ASFV) protein is Late protein I226R.